The chain runs to 289 residues: tRNA pseudouridine synthase B (289 aa).

The active-site Nucleophile is the Asp-55. The disordered stretch occupies residues 243–289 (PGGVLAQHEREGSRALDSAAGNAEHDREEARIADNNREDRSRQHADR). The segment covering 265–289 (AEHDREEARIADNNREDRSRQHADR) has biased composition (basic and acidic residues).

This sequence belongs to the pseudouridine synthase TruB family. Type 1 subfamily.

It catalyses the reaction uridine(55) in tRNA = pseudouridine(55) in tRNA. Responsible for synthesis of pseudouridine from uracil-55 in the psi GC loop of transfer RNAs. The polypeptide is tRNA pseudouridine synthase B (Chlorobium luteolum (strain DSM 273 / BCRC 81028 / 2530) (Pelodictyon luteolum)).